Here is a 71-residue protein sequence, read N- to C-terminus: Large ribosomal subunit protein bL32c (71 aa).

A disordered region spans residues 1-24 (MAVPKKRTSRSKKKIRKNVRKGKK).

It belongs to the bacterial ribosomal protein bL32 family.

It localises to the plastid. It is found in the chloroplast. The polypeptide is Large ribosomal subunit protein bL32c (Pinus koraiensis (Korean pine)).